Here is an 84-residue protein sequence, read N- to C-terminus: Putative defensin-like protein 114 (84 aa).

An N-terminal signal peptide occupies residues 1 to 24 (MAITKKCFAAFVLILLFVMPFVYC). Intrachain disulfides connect cysteine 41-cysteine 81, cysteine 47-cysteine 69, cysteine 54-cysteine 79, and cysteine 58-cysteine 80.

This sequence belongs to the DEFL family.

The protein resides in the secreted. This Arabidopsis thaliana (Mouse-ear cress) protein is Putative defensin-like protein 114.